The sequence spans 1059 residues: Zinc finger protein 658 (1059 aa).

The region spanning 8–79 is the KRAB domain; that stretch reads VSFQDVTVEF…EDEFLNQRYP (72 aa). Lysine 178 is covalently cross-linked (Glycyl lysine isopeptide (Lys-Gly) (interchain with G-Cter in SUMO2)). Residues 325–347 form a C2H2-type 1; degenerate zinc finger; sequence FESNKCEENFSQSSAHIVHQKTQ. The segment at 352-375 adopts a C2H2-type 2; degenerate zinc-finger fold; it reads FGEHNECTDALYQKLDFTAHQRIH. The segment at 381–406 adopts a C2H2-type 3; degenerate zinc-finger fold; sequence YLSDEHGKCRKSFYRKAHLIQHQRPH. A C2H2-type 4; degenerate zinc finger spans residues 412–434; sequence YQYEECAKSFCSSSHPIQHPGTY. C2H2-type zinc fingers lie at residues 440–462, 518–540, 546–568, 574–596, 602–624, 630–652, 658–680, 686–708, 714–736, 742–764, 770–792, 798–820, 826–848, and 854–876; these read YECN…LRIH, YECI…QRIH, YECV…QRVH, YECN…QRIH, YECS…HRIH, YECS…QRIH, YECN…QNIH, YECS…RRIH, YECS…ERIH, and YECN…HRIH. The segment at 882 to 904 adopts a C2H2-type 19; degenerate zinc-finger fold; that stretch reads YECNDCGKTFSKTSHLRAHLRTR. 5 consecutive C2H2-type zinc fingers follow at residues 910-932, 938-960, 966-988, 994-1016, and 1022-1045; these read YECS…QRVH, YECN…QRIH, and YECD…TRMH.

The protein belongs to the krueppel C2H2-type zinc-finger protein family.

The protein localises to the nucleus. Its function is as follows. Mediates transcriptional repression in response to zinc. Represses several genes, including SLC30A5, SLC30A10 and CBWD1, by binding to the zinc transcriptional regulatory element (ZTRE) (5'-C[AC]C[TAG]CC[TC]-N(0-50)-[GA]G[ATC]G[TG]G-3') found in the promoter region. May play a role in the control of ribosome biogenesis, regulating predominantly rRNA levels, as well as those of several ribosomal proteins, thus coordinating this highly zinc-demanding process with the available zinc supply. This Homo sapiens (Human) protein is Zinc finger protein 658 (ZNF658).